Reading from the N-terminus, the 249-residue chain is Triosephosphate isomerase (249 aa).

8 to 10 (NWK) contacts substrate. His95 acts as the Electrophile in catalysis. The active-site Proton acceptor is Glu163. 2 residues coordinate substrate: Gly169 and Ser209.

This sequence belongs to the triosephosphate isomerase family. As to quaternary structure, homodimer.

It is found in the cytoplasm. It catalyses the reaction D-glyceraldehyde 3-phosphate = dihydroxyacetone phosphate. The protein operates within carbohydrate biosynthesis; gluconeogenesis. Its pathway is carbohydrate degradation; glycolysis; D-glyceraldehyde 3-phosphate from glycerone phosphate: step 1/1. Involved in the gluconeogenesis. Catalyzes stereospecifically the conversion of dihydroxyacetone phosphate (DHAP) to D-glyceraldehyde-3-phosphate (G3P). This chain is Triosephosphate isomerase, found in Orientia tsutsugamushi (strain Ikeda) (Rickettsia tsutsugamushi).